Consider the following 473-residue polypeptide: UDP-N-acetylmuramate--L-alanine ligase (473 aa).

Residue 123–129 (GTHGKTT) coordinates ATP.

This sequence belongs to the MurCDEF family.

The protein localises to the cytoplasm. It carries out the reaction UDP-N-acetyl-alpha-D-muramate + L-alanine + ATP = UDP-N-acetyl-alpha-D-muramoyl-L-alanine + ADP + phosphate + H(+). The protein operates within cell wall biogenesis; peptidoglycan biosynthesis. In terms of biological role, cell wall formation. The protein is UDP-N-acetylmuramate--L-alanine ligase of Marinomonas sp. (strain MWYL1).